The sequence spans 516 residues: 4-hydroxybenzoate brominase (decarboxylating) (516 aa).

Positions 13, 32, 40, 41, 51, 102, and 365 each coordinate FAD.

The protein belongs to the FMO family. The cofactor is FAD.

It carries out the reaction 2 bromide + 4-hydroxybenzoate + 2 NADPH + 2 O2 + 5 H(+) = 2,4-dibromophenol + CO2 + 2 NADP(+) + 4 H2O. It catalyses the reaction bromide + 4-hydroxybenzoate + NADPH + O2 + 2 H(+) = 3-bromo-4-hydroxybenzoate + NADP(+) + 2 H2O. The catalysed reaction is 3-bromo-4-hydroxybenzoate + bromide + NADPH + O2 + 3 H(+) = 2,4-dibromophenol + CO2 + NADP(+) + 2 H2O. The enzyme catalyses 3,4-dihydroxybenzoate + 2 bromide + 2 NADPH + 2 O2 + 5 H(+) = 3,5-dibromobenzene-1,2-diol + CO2 + 2 NADP(+) + 4 H2O. It carries out the reaction 3,4-dihydroxybenzoate + bromide + NADPH + O2 + 2 H(+) = 3-bromo-4,5-dihydroxybenzoate + NADP(+) + 2 H2O. It catalyses the reaction 3-bromo-4,5-dihydroxybenzoate + bromide + NADPH + O2 + 3 H(+) = 3,5-dibromobenzene-1,2-diol + CO2 + NADP(+) + 2 H2O. Brominase involved in the biosynthesis of polybrominated aromatic organic compounds. Catalyzes the bromination of 4-hydroxybenzoate (4-HBA) to 3-bromo-4-hydroxybenzoate, followed by bromination and decarboxylation of 3-bromo-4-hydroxybenzoate to 2,4-dibromophenol. Can also use 3,4-dihydroxybenzoate, with lower efficiency, forming 3-bromo-4,5-dihydroxybenzoate and 3,5-dibromobenzene-1,2-diol. The protein is 4-hydroxybenzoate brominase (decarboxylating) of Marinomonas mediterranea (strain ATCC 700492 / JCM 21426 / NBRC 103028 / MMB-1).